Reading from the N-terminus, the 312-residue chain is Phospho-N-acetylmuramoyl-pentapeptide-transferase (312 aa).

The next 9 membrane-spanning stretches (helical) occupy residues 1–21 (MMVVAALLSWFLLGLFIHYSK), 48–68 (GVAFVLALLLVFVGLLAFGGI), 76–96 (EVMILLAALGMGVVGGIDDFL), 115–135 (FPLQVLVALLFAGFAAPLASH), 140–160 (GFMSIGGYPIFDMLFIAFVMV), 165–185 (AFNFTDGLDGLLAGVGMIVLL), 214–234 (VFMGDMGSHAIGAVAAGAYAL), 238–258 (VWLLPIAAIIPVAAVLSVVIQ), and 289–309 (VTLRFWVVTGIATALTWWLMG).

Belongs to the glycosyltransferase 4 family. MraY subfamily. Mg(2+) serves as cofactor.

Its subcellular location is the cell membrane. It catalyses the reaction UDP-N-acetyl-alpha-D-muramoyl-L-alanyl-gamma-D-glutamyl-meso-2,6-diaminopimeloyl-D-alanyl-D-alanine + di-trans,octa-cis-undecaprenyl phosphate = di-trans,octa-cis-undecaprenyl diphospho-N-acetyl-alpha-D-muramoyl-L-alanyl-D-glutamyl-meso-2,6-diaminopimeloyl-D-alanyl-D-alanine + UMP. It participates in cell wall biogenesis; peptidoglycan biosynthesis. Functionally, catalyzes the initial step of the lipid cycle reactions in the biosynthesis of the cell wall peptidoglycan: transfers peptidoglycan precursor phospho-MurNAc-pentapeptide from UDP-MurNAc-pentapeptide onto the lipid carrier undecaprenyl phosphate, yielding undecaprenyl-pyrophosphoryl-MurNAc-pentapeptide, known as lipid I. The polypeptide is Phospho-N-acetylmuramoyl-pentapeptide-transferase (Deinococcus radiodurans (strain ATCC 13939 / DSM 20539 / JCM 16871 / CCUG 27074 / LMG 4051 / NBRC 15346 / NCIMB 9279 / VKM B-1422 / R1)).